The chain runs to 431 residues: Histidinol dehydrogenase (431 aa).

Positions 127, 189, and 212 each coordinate NAD(+). The substrate site is built by Ser-237, Gln-259, and His-262. 2 residues coordinate Zn(2+): Gln-259 and His-262. Residues Glu-326 and His-327 each act as proton acceptor in the active site. Residues His-327, Asp-360, Glu-414, and His-419 each contribute to the substrate site. Residue Asp-360 coordinates Zn(2+). Residue His-419 participates in Zn(2+) binding.

This sequence belongs to the histidinol dehydrogenase family. Zn(2+) serves as cofactor.

It carries out the reaction L-histidinol + 2 NAD(+) + H2O = L-histidine + 2 NADH + 3 H(+). It participates in amino-acid biosynthesis; L-histidine biosynthesis; L-histidine from 5-phospho-alpha-D-ribose 1-diphosphate: step 9/9. In terms of biological role, catalyzes the sequential NAD-dependent oxidations of L-histidinol to L-histidinaldehyde and then to L-histidine. The polypeptide is Histidinol dehydrogenase (Xylella fastidiosa (strain Temecula1 / ATCC 700964)).